Reading from the N-terminus, the 212-residue chain is Thymidylate kinase (212 aa).

10–17 contributes to the ATP binding site; that stretch reads GGEGSGKT.

The protein belongs to the thymidylate kinase family.

It carries out the reaction dTMP + ATP = dTDP + ADP. Its function is as follows. Phosphorylation of dTMP to form dTDP in both de novo and salvage pathways of dTTP synthesis. The polypeptide is Thymidylate kinase (Marinomonas sp. (strain MWYL1)).